Reading from the N-terminus, the 161-residue chain is Regulator of ribonuclease activity A (161 aa).

It belongs to the RraA family. As to quaternary structure, homotrimer. Binds to both RNA-binding sites in the C-terminal region of Rne and to RhlB.

It localises to the cytoplasm. Its function is as follows. Globally modulates RNA abundance by binding to RNase E (Rne) and regulating its endonucleolytic activity. Can modulate Rne action in a substrate-dependent manner by altering the composition of the degradosome. Modulates RNA-binding and helicase activities of the degradosome. In Salmonella agona (strain SL483), this protein is Regulator of ribonuclease activity A.